The primary structure comprises 320 residues: tRNA(Ile)-lysidine synthase (320 aa).

ATP is bound at residue 33–38 (SGGPDS).

This sequence belongs to the tRNA(Ile)-lysidine synthase family.

The protein resides in the cytoplasm. The catalysed reaction is cytidine(34) in tRNA(Ile2) + L-lysine + ATP = lysidine(34) in tRNA(Ile2) + AMP + diphosphate + H(+). Functionally, ligates lysine onto the cytidine present at position 34 of the AUA codon-specific tRNA(Ile) that contains the anticodon CAU, in an ATP-dependent manner. Cytidine is converted to lysidine, thus changing the amino acid specificity of the tRNA from methionine to isoleucine. The polypeptide is tRNA(Ile)-lysidine synthase (Mycolicibacterium paratuberculosis (strain ATCC BAA-968 / K-10) (Mycobacterium paratuberculosis)).